The chain runs to 232 residues: Small ribosomal subunit protein uS3 (232 aa).

Residues 39 to 107 enclose the KH type-2 domain; sequence IRKFLKTKLY…DIAINIKEER (69 aa). Basic and acidic residues predominate over residues 213 to 222; sequence QADKNEDTSP. The tract at residues 213–232 is disordered; it reads QADKNEDTSPKKPRRARRGK. Residues 223–232 are compositionally biased toward basic residues; that stretch reads KKPRRARRGK.

This sequence belongs to the universal ribosomal protein uS3 family. Part of the 30S ribosomal subunit. Forms a tight complex with proteins S10 and S14.

Binds the lower part of the 30S subunit head. Binds mRNA in the 70S ribosome, positioning it for translation. This Campylobacter fetus subsp. fetus (strain 82-40) protein is Small ribosomal subunit protein uS3.